A 130-amino-acid chain; its full sequence is Histone H2A.1 (130 aa).

The interval M1–A22 is disordered. S2 is modified (N-acetylserine). Residues K5 and K7 each carry the N6-acetyllysine modification. Q105 is modified (N5-methylglutamine). Phosphoserine is present on S127. The [ST]-Q motif motif lies at S127–Q128.

It belongs to the histone H2A family. As to quaternary structure, the nucleosome is a histone octamer containing two molecules each of H2A, H2B, H3 and H4 assembled in one H3-H4 heterotetramer and two H2A-H2B heterodimers. The octamer wraps approximately 147 bp of DNA. Phosphorylated to form H2AS128ph (gamma-H2A) in response to DNA double-strand breaks (DSBs) generated by exogenous genotoxic agents and by stalled replication forks. Phosphorylation is dependent on the DNA damage checkpoint kinases MEC1/ATR and TEL1/ATM, spreads on either side of a detected DSB site and may mark the surrounding chromatin for recruitment of proteins required for DNA damage signaling and repair. Gamma-H2A is removed from the DNA prior to the strand invasion-primer extension step of the repair process and subsequently dephosphorylated. Dephosphorylation is necessary for efficient recovery from the DNA damage checkpoint. In terms of processing, acetylated by ESA1 to form H2AK4ac and H2AK7ac.

It is found in the nucleus. Its subcellular location is the chromosome. In terms of biological role, core component of nucleosome which plays a central role in DNA double strand break (DSB) repair. Nucleosomes wrap and compact DNA into chromatin, limiting DNA accessibility to the cellular machineries which require DNA as a template. Histones thereby play a central role in transcription regulation, DNA repair, DNA replication and chromosomal stability. DNA accessibility is regulated via a complex set of post-translational modifications of histones, also called histone code, and nucleosome remodeling. In Lodderomyces elongisporus (strain ATCC 11503 / CBS 2605 / JCM 1781 / NBRC 1676 / NRRL YB-4239) (Yeast), this protein is Histone H2A.1 (HTA1).